A 189-amino-acid chain; its full sequence is HGPRTase-like protein (189 aa).

Belongs to the purine/pyrimidine phosphoribosyltransferase family. Archaeal HPRT subfamily.

Its function is as follows. May catalyze a purine salvage reaction, the substrate is unknown. The sequence is that of HGPRTase-like protein from Natronomonas pharaonis (strain ATCC 35678 / DSM 2160 / CIP 103997 / JCM 8858 / NBRC 14720 / NCIMB 2260 / Gabara) (Halobacterium pharaonis).